The following is a 1052-amino-acid chain: MYFLHGTPQRIQLSSRAIQICRIPKVSFFVVLTETEILIYQIRPLTLISKITKSQNLFERHGKNKKIAVNSEYGIIAVATEKNYVAVYHFTLNASKPVLTPSPYLTRYDDGPGEIFGPIKCEIQYKLAMRYGGGLKCLEIQRDSIVYAADSAPIIQVSTLETTDPNKLWKVSSKQYDLREVTWFLDHSSLISRLYFDVKIDTFFWMSTDGRVYANIGVSSNTNTKSLFGLCVHNPVDLNKSDNDKDINEDLESKLREKKATVLSTNARFSLLYVGTADGTVYAYEIRDFGRQYVQTHSFKYSASSGKVNHIATTGDGHQVMVGYDDGWATLSPYLNLCCASSETEYFNFGLSCGFWDRDSSSFYGLGSKNFSSTGEAEGTGLSTPIIAESLKENDEFFAMEKENVDIQYLSQNDNTNDVLYSITDSKQFISTIYILPFLKSTIVSSVQSTLQVCGAQTSDRLYISKSYEFCSSVKNNFGIDFWDQVEYPQPYVASEWPIRYVSIKDDGSLIAIAGLHGLAIYVCSKKTWFLYKDANMEQLISVTCPMIWCSQFLLAGVVCESNFELHLYKAKGPLDDRENLAKLSFTSTIVTMSVCDEYSLVVYTADNFLHHIRFDINELGRLELDYLTSVNFAPIFTTPSRVRSITLLLPKDLANIQPSDLLFYAVLLVLINGKLVLLSLKKQHSKELLYQCSMLAGDVEFYFINGSQEIPSLFHSIWIMTGKGLKLWLSFSEILSSVLINTKNLIDGLPKFLNTSKRVSLENFHRLSVEDLRSPSFVYKNGVDCNFDNTHLAKLIKNVNISEKFQKECIDLESQGCLLTVLSNYGLLLTAYTQGHKNLVNKMEYAHIQIGVYPFLPEIVRALLLLDKREQAIDLVKTYGHLHYINFVLEKLLSSSLLTYNSSQRDKLLYEVSLLFKDLQEFTTFKIVLGCLRKTEAEYWPMIFKYFGEPKDLMKKCLETEDVKSAAECLIIWQIHQGSASCASTFLSIYEMALKIKNWDVCTELSSYLVSLDPEKRLLKTALELLDEGPDSKDIRLYDQFNNLMKEVDKY.

Phosphotyrosine is present on Tyr293. Residues 661–681 (DLLFYAVLLVLINGKLVLLSL) form a helical membrane-spanning segment.

This sequence belongs to the RIC1 family. In terms of assembly, component of a guanine nucleotide exchange factor (GEF) complex.

The protein localises to the golgi apparatus membrane. Functionally, probable component of a guanine nucleotide exchange factor (GEF) that may be required for efficient fusion of endosome-derived vesicles with the Golgi. This is Guanine nucleotide exchange factor subunit ric1 (ric1) from Schizosaccharomyces pombe (strain 972 / ATCC 24843) (Fission yeast).